The primary structure comprises 526 residues: Tyrosine-protein kinase transforming protein Src (526 aa).

A disordered region spans residues 1–57; the sequence is MGSSKSKPKDPSQRRCSLEPPDSTHHGGFPASQTPNKTAAPDTHRTPSRSFGTVATE. G2 is lipidated: N-myristoyl glycine; by host. The span at 7–25 shows a compositional bias: basic and acidic residues; that stretch reads KPKDPSQRRCSLEPPDSTH. The SH3 domain maps to 81–142; sequence GGVTTFVALY…PSNYVAPSDS (62 aa). In terms of domain architecture, SH2 spans 148 to 245; that stretch reads WYFGKITRRE…GLCHRLTNVC (98 aa). In terms of domain architecture, Protein kinase spans 267-517; sequence LRLEVKLGQG…TFEYLQAQLL (251 aa). ATP is bound by residues 273 to 281 and K295; that span reads LGQGCFGEV. Residue D386 is the Proton acceptor of the active site. Y416 carries the phosphotyrosine; by autocatalysis modification.

It belongs to the protein kinase superfamily. Tyr protein kinase family. SRC subfamily. In terms of processing, the phosphorylated form is termed pp60v-src.

The enzyme catalyses L-tyrosyl-[protein] + ATP = O-phospho-L-tyrosyl-[protein] + ADP + H(+). Its function is as follows. This phosphoprotein, required for both the initiation and the maintenance of neoplastic transformation, is a protein kinase that catalyzes the phosphorylation of tyrosine residues in vitro. The protein is Tyrosine-protein kinase transforming protein Src (V-SRC) of Galliformes.